Here is a 233-residue protein sequence, read N- to C-terminus: Synaptogyrin-1 (233 aa).

N-acetylmethionine is present on M1. At 1 to 23 (MEGGAYGAGKAGGAFDPYTLVRQ) the chain is on the cytoplasmic side. Residues 20-173 (LVRQPHTILR…QAVLAFQRYQ (154 aa)) enclose the MARVEL domain. A helical transmembrane segment spans residues 24–44 (PHTILRVVSWLFSIVVFGSIV). Residues 45–71 (NEGYLNSASEGEEFCIYNRNPNACSYG) are Lumenal-facing. Residues 72–92 (VAVGVLAFLTCLLYLALDVYF) traverse the membrane as a helical segment. Over 93–103 (PQISSVKDRKK) the chain is Cytoplasmic. A helical transmembrane segment spans residues 104–124 (AVLSDIGVSAFWAFLWFVGFC). Topologically, residues 125 to 148 (YLANQWQVSKPKDNPLNEGTDAAR) are lumenal. Residues 149 to 169 (AAIAFSFFSIFTWAGQAVLAF) form a helical membrane-spanning segment. Topologically, residues 170-233 (QRYQIGADSA…EPQGYQSQGY (64 aa)) are cytoplasmic. The segment at 194-233 (MPYAPYVEPTGPDPAGMGGTYQQPANTFDTEPQGYQSQGY) is disordered. Residues 213 to 233 (TYQQPANTFDTEPQGYQSQGY) show a composition bias toward polar residues.

The protein belongs to the synaptogyrin family.

The protein resides in the cytoplasmic vesicle. It localises to the secretory vesicle. The protein localises to the synaptic vesicle membrane. It is found in the melanosome. In terms of biological role, may play a role in regulated exocytosis. Modulates the localization of synaptophysin/SYP into synaptic-like microvesicles and may therefore play a role in synaptic-like microvesicle formation and/or maturation. Involved in the regulation of short-term and long-term synaptic plasticity. The polypeptide is Synaptogyrin-1 (Homo sapiens (Human)).